The chain runs to 130 residues: Small ribosomal subunit protein uS9 (130 aa).

The protein belongs to the universal ribosomal protein uS9 family.

The protein is Small ribosomal subunit protein uS9 of Paraburkholderia phymatum (strain DSM 17167 / CIP 108236 / LMG 21445 / STM815) (Burkholderia phymatum).